We begin with the raw amino-acid sequence, 85 residues long: Probable Sec-independent protein translocase protein TatE (85 aa).

Residues 1–21 (MEGLSITKLLVVGILIVLLFG) form a helical membrane-spanning segment. The disordered stretch occupies residues 64 to 85 (KTVAETKAASDSQAAASVERKD).

The protein belongs to the TatA/E family. TatE subfamily.

It localises to the cell inner membrane. Part of the twin-arginine translocation (Tat) system that transports large folded proteins containing a characteristic twin-arginine motif in their signal peptide across membranes. TatE shares overlapping functions with TatA. The chain is Probable Sec-independent protein translocase protein TatE from Yersinia pestis.